Reading from the N-terminus, the 282-residue chain is Nucleotide-binding protein PXO_02223 (282 aa).

5–12 (GLSGSGKS) contributes to the ATP binding site. GTP is bound at residue 57–60 (DVRS).

The protein belongs to the RapZ-like family.

Functionally, displays ATPase and GTPase activities. In Xanthomonas oryzae pv. oryzae (strain PXO99A), this protein is Nucleotide-binding protein PXO_02223.